We begin with the raw amino-acid sequence, 355 residues long: Elongation factor Ts (355 aa).

Residues 82–85 are involved in Mg(2+) ion dislocation from EF-Tu; it reads TDFV.

The protein belongs to the EF-Ts family.

The protein localises to the cytoplasm. Functionally, associates with the EF-Tu.GDP complex and induces the exchange of GDP to GTP. It remains bound to the aminoacyl-tRNA.EF-Tu.GTP complex up to the GTP hydrolysis stage on the ribosome. The sequence is that of Elongation factor Ts from Helicobacter pylori (strain P12).